A 152-amino-acid polypeptide reads, in one-letter code: Deoxyuridine 5'-triphosphate nucleotidohydrolase (152 aa).

Substrate is bound by residues 71 to 73 (RSG), Asn-84, 88 to 90 (LID), and Met-98.

The protein belongs to the dUTPase family. Requires Mg(2+) as cofactor.

The enzyme catalyses dUTP + H2O = dUMP + diphosphate + H(+). Its pathway is pyrimidine metabolism; dUMP biosynthesis; dUMP from dCTP (dUTP route): step 2/2. Functionally, this enzyme is involved in nucleotide metabolism: it produces dUMP, the immediate precursor of thymidine nucleotides and it decreases the intracellular concentration of dUTP so that uracil cannot be incorporated into DNA. This Shewanella halifaxensis (strain HAW-EB4) protein is Deoxyuridine 5'-triphosphate nucleotidohydrolase.